Consider the following 596-residue polypeptide: Elongation factor 4 (596 aa).

A tr-type G domain is found at 2-184; that stretch reads KHIRNFSIIA…MIVKDVPPPV (183 aa). GTP is bound by residues 14–19 and 131–134; these read DHGKST and NKID.

Belongs to the TRAFAC class translation factor GTPase superfamily. Classic translation factor GTPase family. LepA subfamily.

It localises to the cell inner membrane. The enzyme catalyses GTP + H2O = GDP + phosphate + H(+). Its function is as follows. Required for accurate and efficient protein synthesis under certain stress conditions. May act as a fidelity factor of the translation reaction, by catalyzing a one-codon backward translocation of tRNAs on improperly translocated ribosomes. Back-translocation proceeds from a post-translocation (POST) complex to a pre-translocation (PRE) complex, thus giving elongation factor G a second chance to translocate the tRNAs correctly. Binds to ribosomes in a GTP-dependent manner. The protein is Elongation factor 4 of Pseudoalteromonas translucida (strain TAC 125).